The following is a 375-amino-acid chain: MALAAELIRAPSVTPHADDALELVAKRLEAAGYRVERLTFETGGVPIPNLYARIGTDGPNLCFAGHVDVVPEGDATQWHHAPFAGTVEDGVLHGRGAVDMKGAVAAFLAAALAFGRPQRGSLSFLITGDEEGPALDGTVKVVEWLKARGETIDHCVLGEPTNPDALGDAFKVGRRGSLSGILTVKGVQGHVAYPHLADNPIPRLLKLIGDLTAAPLDHGSDFFPPSNLEVVSVDVGNPVFNLIPAQATARFNVRFNDLFSLESLKSEIIRRLDGAGLTYDLAFQTGASQSFLTAPGPFTDLVASAVEEVTGRRPEPSTSGGTSDARFIKDICPVVEFGLVGRTMHKVDEATPVKDIEALTAIYGRIIARYFSTFA.

His66 serves as a coordination point for Zn(2+). Asp68 is a catalytic residue. Asp99 contributes to the Zn(2+) binding site. Glu130 functions as the Proton acceptor in the catalytic mechanism. Zn(2+) contacts are provided by Glu131, Glu159, and His345.

The protein belongs to the peptidase M20A family. DapE subfamily. Homodimer. Requires Zn(2+) as cofactor. It depends on Co(2+) as a cofactor.

It carries out the reaction N-succinyl-(2S,6S)-2,6-diaminopimelate + H2O = (2S,6S)-2,6-diaminopimelate + succinate. It functions in the pathway amino-acid biosynthesis; L-lysine biosynthesis via DAP pathway; LL-2,6-diaminopimelate from (S)-tetrahydrodipicolinate (succinylase route): step 3/3. Catalyzes the hydrolysis of N-succinyl-L,L-diaminopimelic acid (SDAP), forming succinate and LL-2,6-diaminopimelate (DAP), an intermediate involved in the bacterial biosynthesis of lysine and meso-diaminopimelic acid, an essential component of bacterial cell walls. The sequence is that of Succinyl-diaminopimelate desuccinylase from Xanthobacter autotrophicus (strain ATCC BAA-1158 / Py2).